Reading from the N-terminus, the 343-residue chain is Major histocompatibility complex class I-related protein 1 (343 aa).

The signal sequence occupies residues 1–18 (MMFLLPFLTVFLAKQSHT). The alpha-1 stretch occupies residues 19–105 (RTHSLRYFRL…RHLQRHYNHS (87 aa)). Positions 19 to 197 (RTHSLRYFRL…EYGSDALERT (179 aa)) are antigen-binding cleft. Over 19–298 (RTHSLRYFRL…QESGNTLLVA (280 aa)) the chain is Extracellular. Positions 25 and 27 each coordinate 8-(9H-purin-6-yl)-2-oxa-8-azabicyclo[3.3.1]nona-3,6-diene-4,6-dicarbaldehyde. Arginine 27, serine 42, and lysine 61 together coordinate 5-(2-oxoethylideneamino)-6-(D-ribitylamino)uracil. 5-(2-oxopropylideneamino)-6-(D-ribitylamino)uracil-binding residues include arginine 27, serine 42, and lysine 61. Positions 27, 42, and 61 each coordinate 7-hydroxy-6-methyl-8-(1-D-ribityl)lumazine. Positions 61 and 76 each coordinate 8-(9H-purin-6-yl)-2-oxa-8-azabicyclo[3.3.1]nona-3,6-diene-4,6-dicarbaldehyde. Lysine 61 serves as a coordination point for 2-amino-4-oxopteridine-6-carbaldehyde. Lysine 61 serves as a coordination point for pyridoxal. Residue asparagine 103 is glycosylated (N-linked (GlcNAc...) asparagine). Residues 106–197 (GLHTYQRMIG…EYGSDALERT (92 aa)) are alpha-2. Arginine 112 is a binding site for 8-(9H-purin-6-yl)-2-oxa-8-azabicyclo[3.3.1]nona-3,6-diene-4,6-dicarbaldehyde. Arginine 112, tyrosine 170, and glutamine 171 together coordinate 5-(2-oxoethylideneamino)-6-(D-ribitylamino)uracil. Positions 112, 170, and 171 each coordinate 5-(2-oxopropylideneamino)-6-(D-ribitylamino)uracil. 7-hydroxy-6-methyl-8-(1-D-ribityl)lumazine is bound by residues arginine 112, tyrosine 170, and glutamine 171. 2 disulfides stabilise this stretch: cysteine 116–cysteine 179 and cysteine 218–cysteine 274. An alpha-3 region spans residues 198-289 (EHPVVRTTRK…GLQMVLEAPQ (92 aa)). An Ig-like C1-type domain is found at 200–302 (PVVRTTRKET…NTLLVANTIS (103 aa)). Positions 290–298 (ESGNTLLVA) are connecting peptide. Residues 299-319 (NTISGTIILIIVLAGVGALIW) traverse the membrane as a helical segment. At 320 to 343 (RRRSREPKEVMYQPTQVNEGSSPS) the chain is on the cytoplasmic side.

Heterotrimer that consists of MR1, B2M and metabolite antigen. Major classes of metabolite ligands presented by MR1 include riboflavin-related antigens, pyrimidines and ribityl lumazines, nucleobase adducts and folate derivatives. Forms reversible covalent Schiff base complexes with microbial pyrimidine-based metabolite, which serves as a molecular switch triggering complete folding, stable association with B2M and translocation of the ternary complex from endoplasmic reticulum to the plasma membrane. Alternatively, forms non-Schiff base complexes with ribityl lumazines. On antigen-presenting cells, the ternary complex interacts with TCR on MR1-restricted T cells. Interacts with TAPBP and TAPBPL chaperones in the endoplasmic reticulum. TAPBP associated or not with MHC class I peptide loading complex binds ligand-free MR1 or MR1-B2M complex, providing for stable MR1 pools ready for metabolite antigen processing. TAPBPL interacts with MR1 in a ligand-independent way; this interaction may stabilize MR1 pool and facilitate ligand loading and dissociation. Structurally, MR1-B2M heterodimer adopts a topology similar to classical MHC class I molecules, with alpha-1 and alpha-2 domains of MR1 forming the antigen-binding cleft composed of two alpha-helices resting on a floor of 7-stranded anti-parallel beta-pleated sheet. MR1-B2M heterodimer (via alpha-helices) interacts with TCR (via CDR domains). Post-translationally, N-glycosylated. Expressed in kidney, liver, testis, spleen, thymus, brain, and heart.

It is found in the cell membrane. It localises to the endoplasmic reticulum membrane. Its subcellular location is the golgi apparatus membrane. The protein localises to the early endosome membrane. The protein resides in the late endosome membrane. Its function is as follows. Antigen-presenting molecule specialized in displaying microbial pyrimidine-based metabolites to alpha-beta T cell receptors (TCR) on innate-type mucosal-associated invariant T (MAIT) cells. In complex with B2M preferentially presents riboflavin-derived metabolites to semi-invariant TCRs on MAIT cells, guiding immune surveillance of the microbial metabolome at mucosal epithelial barriers. Signature pyrimidine-based microbial antigens are generated via non-enzymatic condensation of metabolite intermediates of the riboflavin pathway with by-products arising from other metabolic pathways such as glycolysis. Typical potent antigenic metabolites are 5-(2-oxoethylideneamino)-6-D-ribitylaminouracil (5-OE-RU) and 5-(2-oxopropylideneamino)-6-D-ribitylaminouracil (5-OP-RU), products of condensation of 5-amino-6-D-ribityaminouracil (5-A-RU) with glyoxal or methylglyoxal by-products, respectively. May present microbial antigens to various MAIT cell subsets, providing for unique recognition of diverse microbes, including pathogens that do not synthesize riboflavin. Upon antigen recognition, elicits rapid innate-type MAIT cell activation to eliminate pathogenic microbes by directly killing infected cells. During T cell development, drives thymic selection and post-thymic terminal differentiation of MAIT cells in a process dependent on commensal microflora. Acts as an immune sensor of cancer cell metabolome. May present a tumor-specific or -associated metabolite essential for cancer cell survival to a pan-cancer TCR on a non-MAIT CD8-positive T cell clone, triggering T cell-mediated killing of a wide range of cancer cell types. May present tumor-enriched pyridoxal and pyridoxal 5'-phosphate antigens, enabling preferential recognition of cancer cells. Presents nucleobase carbonyl adducts generated during oxidative stress. Captures M3Ade, a nucleobase adduct composed of one adenine modified by a malondialdehyde trimer, for recognition by MR1-restricted T cell clones expressing a polyclonal TCR repertoire. This is Major histocompatibility complex class I-related protein 1 from Rattus norvegicus (Rat).